A 517-amino-acid polypeptide reads, in one-letter code: ATP synthase subunit alpha 1 (517 aa).

176-183 is an ATP binding site; that stretch reads GDRQTGKT.

It belongs to the ATPase alpha/beta chains family. In terms of assembly, F-type ATPases have 2 components, CF(1) - the catalytic core - and CF(0) - the membrane proton channel. CF(1) has five subunits: alpha(3), beta(3), gamma(1), delta(1), epsilon(1). CF(0) has three main subunits: a(1), b(2) and c(9-12). The alpha and beta chains form an alternating ring which encloses part of the gamma chain. CF(1) is attached to CF(0) by a central stalk formed by the gamma and epsilon chains, while a peripheral stalk is formed by the delta and b chains.

The protein localises to the cell inner membrane. It carries out the reaction ATP + H2O + 4 H(+)(in) = ADP + phosphate + 5 H(+)(out). Its function is as follows. Produces ATP from ADP in the presence of a proton gradient across the membrane. The alpha chain is a regulatory subunit. In Shewanella frigidimarina (strain NCIMB 400), this protein is ATP synthase subunit alpha 1.